An 86-amino-acid polypeptide reads, in one-letter code: MPPRSIEEWFYYKLLSSPGFHRFVRKVYRKVNGIKEDPFTDQSTAFQYLYKPTPRQKFKALRLLFWDEMRSTFGFRRRLGDRFKKD.

As to quaternary structure, associates with the mitochondrial ribosome.

It localises to the mitochondrion. Its function is as follows. Component of MIOREX complexes, large expressome-like assemblies of ribosomes with factors involved in all the steps of post-transcriptional gene expression. In Saccharomyces cerevisiae (strain ATCC 204508 / S288c) (Baker's yeast), this protein is MIOREX complex component 7.